We begin with the raw amino-acid sequence, 367 residues long: Mating-type protein ALPHA2 (367 aa).

The segment at residues 273–338 (GADAIDSEKL…NKRRTGAKKR (66 aa)) is a DNA-binding region (homeobox; TALE-type).

It belongs to the TALE/M-ATYP homeobox family. Forms a heterodimer with A1.

The protein localises to the nucleus. Its function is as follows. Mating type proteins are sequence specific DNA-binding proteins that act as master switches in yeast differentiation by controlling gene expression in a cell type-specific fashion. Transcriptional corepressor that acts in conjunction with A1 to repress transcription of haploid-specific genes. In Yarrowia lipolytica (strain CLIB 122 / E 150) (Yeast), this protein is Mating-type protein ALPHA2 (MATB2).